A 149-amino-acid polypeptide reads, in one-letter code: Aquaporin-like protein 2 (149 aa).

Residues 1–35 (MSNESNDLEKNISHLDPTGVDNAYIPPEQPETKHS) are disordered. Over 1–47 (MSNESNDLEKNISHLDPTGVDNAYIPPEQPETKHSRFNIDRGTLRNH) the chain is Cytoplasmic. The helical transmembrane segment at 48 to 68 (FIAAVGEFCGTFMFLWCAYVI) threads the bilayer. The Extracellular segment spans residues 69-89 (CNVANHDVALTTEPEGSHPGQ). Residues 90–110 (LIMIALGFGFSVMFSIWCFWW) traverse the membrane as a helical segment. Residues 111–149 (GFEPSRFSLFVFGQSHLTSQMCSDVVSSDHCWDGCWWCR) lie on the Cytoplasmic side of the membrane.

It belongs to the MIP/aquaporin (TC 1.A.8) family.

It localises to the endoplasmic reticulum membrane. The protein resides in the cell membrane. Its function is as follows. Water channel required to facilitate the transport of water across membranes. Involved in freeze tolerance, osmotolerance and cell flocculation in liquid cultures. Is non-functional in most laboratory strains. This Saccharomyces cerevisiae (strain Lalvin EC1118 / Prise de mousse) (Baker's yeast) protein is Aquaporin-like protein 2 (AQY2-2).